Reading from the N-terminus, the 491-residue chain is Probable glycine dehydrogenase (decarboxylating) subunit 2 (491 aa).

K273 is modified (N6-(pyridoxal phosphate)lysine).

This sequence belongs to the GcvP family. C-terminal subunit subfamily. As to quaternary structure, the glycine cleavage system is composed of four proteins: P, T, L and H. In this organism, the P 'protein' is a heterodimer of two subunits. Requires pyridoxal 5'-phosphate as cofactor.

The enzyme catalyses N(6)-[(R)-lipoyl]-L-lysyl-[glycine-cleavage complex H protein] + glycine + H(+) = N(6)-[(R)-S(8)-aminomethyldihydrolipoyl]-L-lysyl-[glycine-cleavage complex H protein] + CO2. The glycine cleavage system catalyzes the degradation of glycine. The P protein binds the alpha-amino group of glycine through its pyridoxal phosphate cofactor; CO(2) is released and the remaining methylamine moiety is then transferred to the lipoamide cofactor of the H protein. This chain is Probable glycine dehydrogenase (decarboxylating) subunit 2, found in Bacillus cereus (strain B4264).